Here is a 641-residue protein sequence, read N- to C-terminus: MAHVLGIDLGTTNSCMAIVEGGQPVVLENSEGARTTPSIVAFTKSGERLVGQAAKRQAITNSKNTIYSIKRFIGRKFSEVQEEIKRVPYKVIEGKNGDCAVEVEVAGERRVYTPQEISAFILMKLKADAESKLGEKITQAVITVPAYFNDSQRQATKAAGEIAGLEVLRIINEPTAASLAYGLDKKKDERIAVYDLGGGTFDISVLEIGEGVFEVKATNGDTHLGGDDWDAAIMEWIISDFKKETGIDLHGQPDAVQRIKEEAEKAKIALSSALEYEINLPFITADQTGPKHIQKKLTRAKLEQLTEHLAERTVQPVLNCLKDAKLTAADIDELVLVGGMTRMPKIIEIARKLIGREPHKGVNPDEVVAVGAAIQGAVLKGQVKDVLLLDVTPLTLSIETAGGIATPMIPRNTTIPTRKSQIFSTFSDNQPSVEIKVLQGERPMARDNKLLGVFHLDGIPPAPRGVPQIEVTFDIDANGILHVSAKDLGTGREQKITITGSSGLSKEEIERMTKEAEAYREQDLKNKERAEAKNNADNAAYQAEKLLREYGDKVDSAKKMEVEKCIEKVREVIKGDDTEAIKRAMDELNEKVQAISVEMYRAASSKASAASSPPPPPGAGGQKSDVIDAEFEKVDKDKPQA.

Phosphothreonine; by autocatalysis is present on Thr-200. Residues 602-611 (AASSKASAAS) show a composition bias toward low complexity. Residues 602 to 641 (AASSKASAASSPPPPPGAGGQKSDVIDAEFEKVDKDKPQA) form a disordered region. Positions 630–641 (EFEKVDKDKPQA) are enriched in basic and acidic residues.

It belongs to the heat shock protein 70 family.

In terms of biological role, acts as a chaperone. The chain is Chaperone protein DnaK from Methylacidiphilum infernorum (isolate V4) (Methylokorus infernorum (strain V4)).